A 363-amino-acid chain; its full sequence is Chorismate synthase (363 aa).

Residues Arg48 and Arg54 each contribute to the NADP(+) site. FMN is bound by residues Arg125–Ser127, Asn237–Ala238, Gly277, Lys292–Ser296, and Arg318.

This sequence belongs to the chorismate synthase family. In terms of assembly, homotetramer. The cofactor is FMNH2.

The catalysed reaction is 5-O-(1-carboxyvinyl)-3-phosphoshikimate = chorismate + phosphate. Its pathway is metabolic intermediate biosynthesis; chorismate biosynthesis; chorismate from D-erythrose 4-phosphate and phosphoenolpyruvate: step 7/7. Its function is as follows. Catalyzes the anti-1,4-elimination of the C-3 phosphate and the C-6 proR hydrogen from 5-enolpyruvylshikimate-3-phosphate (EPSP) to yield chorismate, which is the branch point compound that serves as the starting substrate for the three terminal pathways of aromatic amino acid biosynthesis. This reaction introduces a second double bond into the aromatic ring system. In Pseudomonas syringae pv. syringae (strain B728a), this protein is Chorismate synthase.